A 246-amino-acid chain; its full sequence is Cytochrome c oxidase subunit 2 (246 aa).

The next 2 membrane-spanning stretches (helical) occupy residues 31–51 (HMMYYLALMLGLVSYMLYVMM) and 72–92 (IMWTMFPAVMLLLMAFPSFML). The Cu cation site is built by histidine 175, cysteine 210, glutamate 212, cysteine 214, histidine 218, and methionine 221. A Mg(2+)-binding site is contributed by glutamate 212.

This sequence belongs to the cytochrome c oxidase subunit 2 family. In terms of assembly, component of the cytochrome c oxidase (complex IV, CIV), a multisubunit enzyme composed of a catalytic core of 3 subunits and several supernumerary subunits. The complex exists as a monomer or a dimer and forms supercomplexes (SCs) in the inner mitochondrial membrane with ubiquinol-cytochrome c oxidoreductase (cytochrome b-c1 complex, complex III, CIII). Cu cation serves as cofactor.

It localises to the mitochondrion inner membrane. The enzyme catalyses 4 Fe(II)-[cytochrome c] + O2 + 8 H(+)(in) = 4 Fe(III)-[cytochrome c] + 2 H2O + 4 H(+)(out). Functionally, component of the cytochrome c oxidase, the last enzyme in the mitochondrial electron transport chain which drives oxidative phosphorylation. The respiratory chain contains 3 multisubunit complexes succinate dehydrogenase (complex II, CII), ubiquinol-cytochrome c oxidoreductase (cytochrome b-c1 complex, complex III, CIII) and cytochrome c oxidase (complex IV, CIV), that cooperate to transfer electrons derived from NADH and succinate to molecular oxygen, creating an electrochemical gradient over the inner membrane that drives transmembrane transport and the ATP synthase. Cytochrome c oxidase is the component of the respiratory chain that catalyzes the reduction of oxygen to water. Electrons originating from reduced cytochrome c in the intermembrane space (IMS) are transferred via the dinuclear copper A center (CU(A)) of subunit 2 and heme A of subunit 1 to the active site in subunit 1, a binuclear center (BNC) formed by heme A3 and copper B (CU(B)). The BNC reduces molecular oxygen to 2 water molecules using 4 electrons from cytochrome c in the IMS and 4 protons from the mitochondrial matrix. This is Cytochrome c oxidase subunit 2 (COX2) from Debaryomyces hansenii (strain ATCC 36239 / CBS 767 / BCRC 21394 / JCM 1990 / NBRC 0083 / IGC 2968) (Yeast).